The primary structure comprises 124 residues: Small ribosomal subunit protein bS6 (124 aa).

The disordered stretch occupies residues 96 to 124 (ETAPSPMMKEVQREEARKAAQTTTEGQAA). The span at 115 to 124 (AQTTTEGQAA) shows a compositional bias: polar residues.

This sequence belongs to the bacterial ribosomal protein bS6 family.

Functionally, binds together with bS18 to 16S ribosomal RNA. The polypeptide is Small ribosomal subunit protein bS6 (Cupriavidus pinatubonensis (strain JMP 134 / LMG 1197) (Cupriavidus necator (strain JMP 134))).